A 233-amino-acid polypeptide reads, in one-letter code: Large ribosomal subunit protein uL1 (233 aa).

This sequence belongs to the universal ribosomal protein uL1 family. Part of the 50S ribosomal subunit.

Its function is as follows. Binds directly to 23S rRNA. The L1 stalk is quite mobile in the ribosome, and is involved in E site tRNA release. Protein L1 is also a translational repressor protein, it controls the translation of the L11 operon by binding to its mRNA. The sequence is that of Large ribosomal subunit protein uL1 from Campylobacter jejuni subsp. doylei (strain ATCC BAA-1458 / RM4099 / 269.97).